A 240-amino-acid polypeptide reads, in one-letter code: MDEKDLATQQAQAGQDPRLPGPDEDQERAEGAEAQAAEGAPPPHRVIPPHPGLRQDGGPGKPPRPSLRWDGGPGKAFPKPADGATYAKEAAEKGMTPPQLGAGQAGGPGKPPHPGPDRDGGSKASRASSPKKAGGKGLVSLKGDRAFQRLKKGRSGRGRLVLVRWLPRQEGVAVGIVVSKKVGKAVVRNKVRRRIREILRRLHLPPADLLVIAQPEAKDAGFAELARDLFLALKKSGLVQ.

The interval 1 to 140 (MDEKDLATQQ…KKAGGKGLVS (140 aa)) is disordered. Positions 40–51 (APPPHRVIPPHP) are enriched in pro residues. Positions 47–123 (IPPHPGLRQD…PGPDRDGGSK (77 aa)) are insert. Over residues 122–132 (SKASRASSPKK) the composition is skewed to low complexity.

This sequence belongs to the RnpA family. As to quaternary structure, consists of a catalytic RNA component (M1 or rnpB) and a protein subunit.

It carries out the reaction Endonucleolytic cleavage of RNA, removing 5'-extranucleotides from tRNA precursor.. In terms of biological role, RNaseP catalyzes the removal of the 5'-leader sequence from pre-tRNA to produce the mature 5'-terminus. It can also cleave other RNA substrates such as 4.5S RNA. The protein component plays an auxiliary but essential role in vivo by binding to the 5'-leader sequence and broadening the substrate specificity of the ribozyme. This is Ribonuclease P protein component from Thermus filiformis.